Reading from the N-terminus, the 120-residue chain is uncharacterized protein (120 aa).

Residues tyrosine 19 to glycine 41 traverse the membrane as a helical segment. A disordered region spans residues serine 57–aspartate 78. The span at histidine 61–glutamate 75 shows a compositional bias: basic and acidic residues.

Its subcellular location is the membrane. This is an uncharacterized protein from Schizosaccharomyces pombe (strain 972 / ATCC 24843) (Fission yeast).